A 237-amino-acid polypeptide reads, in one-letter code: MNRKRTIILDTETTGINQTSLPHINHRIIEIGAVEIIDRCFTGNNFHVYIQPGRSIESGALKVHGITNKFLLDKPIFKDIADSFLNYIKNSILVIHNASFDVGFINQELEILNKKIKINTFCSIIDTLKIARELFPGKKNTLDALCTRYKINKSHRNLHSAIVDSYLLGKLYLLMTGGQDSLFSDNTINYKENFKKLKKNIQLKNNTLRILHPTLKENDLHEKYLQYMKDKSTCLWN.

A divalent metal cation contacts are provided by D10 and E12. Substrate is bound by residues D10, E12, and H64. Residue H159 is the Proton acceptor of the active site. D164 provides a ligand contact to a divalent metal cation. D164 contributes to the substrate binding site.

As to quaternary structure, the DNA polymerase holoenzyme is a complex that contains 10 different types of subunits. These subunits are organized into 3 functionally essential subassemblies: the pol III core, the beta sliding clamp processivity factor and the clamp-loading complex. The pol III core (subunits alpha,epsilon and theta) contains the polymerase and the 3'-5' exonuclease proofreading activities. The polymerase is tethered to the template via the sliding clamp processivity factor. The clamp-loading complex assembles the beta processivity factor onto the primer template and plays a central role in the organization and communication at the replication fork. This complex contains delta, delta', psi and chi, and copies of either or both of two different DnaX proteins, gamma and tau. The composition of the holoenzyme is, therefore: (alpha,epsilon,theta)[2]-(gamma/tau)[3]-delta,delta', psi,chi-beta[4]. It depends on Mg(2+) as a cofactor. Requires Mn(2+) as cofactor.

The enzyme catalyses DNA(n) + a 2'-deoxyribonucleoside 5'-triphosphate = DNA(n+1) + diphosphate. Functionally, DNA polymerase III is a complex, multichain enzyme responsible for most of the replicative synthesis in bacteria. The epsilon subunit contain the editing function and is a proofreading 3'-5' exonuclease. This chain is DNA polymerase III subunit epsilon (dnaQ), found in Buchnera aphidicola subsp. Acyrthosiphon pisum (strain APS) (Acyrthosiphon pisum symbiotic bacterium).